The following is a 477-amino-acid chain: Ankyrin repeat, SAM and basic leucine zipper domain-containing protein 1 (477 aa).

Residues S17, S18, and S20 each carry the phosphoserine modification. ANK repeat units follow at residues 46–76, 80–109, 112–146, 150–179, 183–212, and 216–245; these read EKKE…SVDA, YGWT…NASF, DKQT…DPNV, RLMT…EVNT, NGYT…NKML, and DGKL…PLEG. Residues 274 to 336 enclose the SAM domain; the sequence is SYAAFGDLEV…KILTALKELE (63 aa).

In terms of assembly, interacts with DDX4, PIWIL1, RANBP9 and TDRD1.

The protein resides in the cytoplasm. Functionally, plays a central role during spermatogenesis by repressing transposable elements and preventing their mobilization, which is essential for the germline integrity. Acts via the piRNA metabolic process, which mediates the repression of transposable elements during meiosis by forming complexes composed of piRNAs and Piwi proteins and governs the methylation and subsequent repression of transposons. Its association with pi-bodies suggests a participation in the primary piRNAs metabolic process. Required prior to the pachytene stage to facilitate the production of multiple types of piRNAs, including those associated with repeats involved in the regulation of retrotransposons. May act by mediating protein-protein interactions during germ cell maturation. The sequence is that of Ankyrin repeat, SAM and basic leucine zipper domain-containing protein 1 (ASZ1) from Ateles geoffroyi (Black-handed spider monkey).